We begin with the raw amino-acid sequence, 411 residues long: Tyrosine--tRNA ligase (411 aa).

Tyrosine 34 lines the L-tyrosine pocket. Residues 39 to 48 (CTATSLHIGS) carry the 'HIGH' region motif. L-tyrosine is bound by residues tyrosine 171 and glutamine 175. Residues 231-235 (KMGKT) carry the 'KMSKS' region motif. Residue lysine 234 coordinates ATP. The S4 RNA-binding domain occupies 345–411 (ISAYELFHEA…GKKRHILVRV (67 aa)).

Belongs to the class-I aminoacyl-tRNA synthetase family. TyrS type 1 subfamily. As to quaternary structure, homodimer.

The protein localises to the cytoplasm. It catalyses the reaction tRNA(Tyr) + L-tyrosine + ATP = L-tyrosyl-tRNA(Tyr) + AMP + diphosphate + H(+). Catalyzes the attachment of tyrosine to tRNA(Tyr) in a two-step reaction: tyrosine is first activated by ATP to form Tyr-AMP and then transferred to the acceptor end of tRNA(Tyr). This chain is Tyrosine--tRNA ligase, found in Rickettsia peacockii (strain Rustic).